We begin with the raw amino-acid sequence, 165 residues long: Large ribosomal subunit protein uL22c (165 aa).

Belongs to the universal ribosomal protein uL22 family. Part of the 50S ribosomal subunit.

The protein localises to the plastid. The protein resides in the chloroplast. Functionally, this protein binds specifically to 23S rRNA. The globular domain of the protein is located near the polypeptide exit tunnel on the outside of the subunit, while an extended beta-hairpin is found that lines the wall of the exit tunnel in the center of the 70S ribosome. The protein is Large ribosomal subunit protein uL22c (rpl22) of Daucus carota (Wild carrot).